The primary structure comprises 389 residues: Sulfate adenylyltransferase (389 aa).

The protein belongs to the sulfate adenylyltransferase family.

The catalysed reaction is sulfate + ATP + H(+) = adenosine 5'-phosphosulfate + diphosphate. The protein operates within sulfur metabolism; hydrogen sulfide biosynthesis; sulfite from sulfate: step 1/3. The sequence is that of Sulfate adenylyltransferase from Microcystis aeruginosa (strain NIES-843 / IAM M-2473).